A 128-amino-acid polypeptide reads, in one-letter code: Small ribosomal subunit protein uS8 (128 aa).

The protein belongs to the universal ribosomal protein uS8 family. As to quaternary structure, part of the 30S ribosomal subunit. Contacts proteins S5 and S12.

In terms of biological role, one of the primary rRNA binding proteins, it binds directly to 16S rRNA central domain where it helps coordinate assembly of the platform of the 30S subunit. The chain is Small ribosomal subunit protein uS8 from Methylacidiphilum infernorum (isolate V4) (Methylokorus infernorum (strain V4)).